A 245-amino-acid polypeptide reads, in one-letter code: Probable septum site-determining protein MinC (245 aa).

Positions 112-132 are enriched in basic and acidic residues; it reads ARERPLESAEPVAPKKPEKPP. Residues 112-140 are disordered; sequence ARERPLESAEPVAPKKPEKPPEPTVKPTR.

This sequence belongs to the MinC family. Interacts with MinD and FtsZ.

Its function is as follows. Cell division inhibitor that blocks the formation of polar Z ring septums. Rapidly oscillates between the poles of the cell to destabilize FtsZ filaments that have formed before they mature into polar Z rings. Prevents FtsZ polymerization. This Pseudomonas fluorescens (strain Pf0-1) protein is Probable septum site-determining protein MinC.